Here is a 503-residue protein sequence, read N- to C-terminus: Carboxyl-terminal PDZ ligand of neuronal nitric oxide synthase protein (503 aa).

Positions F26–G191 constitute a PID domain. The interval H170–D212 is disordered. Phosphoserine occurs at positions 183, 187, 190, and 262. The segment at L266 to S285 is disordered. Residues A319 to L360 are a coiled coil. A phosphoserine mark is found at S368, S371, S398, and S414. Positions Q491–V503 are interaction with NOS1. The PDZ-binding motif lies at I501–V503.

As to quaternary structure, interacts with the PDZ domain of NOS1 or the second PDZ domain of DLG4 through its C-terminus. Interacts with RASD1 and SYN1, SYN2 and SYN3 via its PID domain. Forms a ternary complex with NOS1 and RASD1. Forms a ternary complex with NOS1 and SYN1. In terms of tissue distribution, mainly expressed in brain. Highly expressed in accessory olfactory bulb, caudate-putamen, cerebellum, cerebral cortex, dentate gyrus of the hippocampus, islands of Calleja, olfactory bulb and supraoptic nucleus. Expressed in kidney glomeruli podocytes (at protein level).

The protein resides in the cell projection. It localises to the filopodium. The protein localises to the podosome. Adapter protein involved in neuronal nitric-oxide (NO) synthesis regulation via its association with nNOS/NOS1. The complex formed with NOS1 and synapsins is necessary for specific NO and synapsin functions at a presynaptic level. Mediates an indirect interaction between NOS1 and RASD1 leading to enhance the ability of NOS1 to activate RASD1. Competes with DLG4 for interaction with NOS1, possibly affecting NOS1 activity by regulating the interaction between NOS1 and DLG4. In kidney podocytes, plays a role in podosomes and filopodia formation through CDC42 activation. The sequence is that of Carboxyl-terminal PDZ ligand of neuronal nitric oxide synthase protein from Rattus norvegicus (Rat).